The sequence spans 307 residues: CRISPR-associated endonuclease Cas1 2 (307 aa).

Residues glutamate 142, histidine 206, and glutamate 221 each contribute to the Mn(2+) site.

This sequence belongs to the CRISPR-associated endonuclease Cas1 family. Homodimer, forms a heterotetramer with a Cas2 homodimer. Forms oligomers, probably binds nucleic acids as a homodimer. Mg(2+) serves as cofactor. It depends on Mn(2+) as a cofactor.

CRISPR (clustered regularly interspaced short palindromic repeat), is an adaptive immune system that provides protection against mobile genetic elements (viruses, transposable elements and conjugative plasmids). CRISPR clusters contain spacers, sequences complementary to antecedent mobile elements, and target invading nucleic acids. CRISPR clusters are transcribed and processed into CRISPR RNA (crRNA). Acts as a dsDNA endonuclease. Involved in the integration of spacer DNA into the CRISPR cassette. In terms of biological role, in vitro catalyzes a concerted transesterification reaction on branched DNA, as would be expected during integration of protospacers into the CRISPR leader sequence; Cas2 is not required in vitro. This reaction requires a 3'-OH group at the branch point. Binds ss- and dsDNA and ss- and dsRNA with approximately equal affinity. May be able to anneal complementary DNA strands. The sequence is that of CRISPR-associated endonuclease Cas1 2 from Saccharolobus solfataricus (strain ATCC 35092 / DSM 1617 / JCM 11322 / P2) (Sulfolobus solfataricus).